The sequence spans 527 residues: GMP synthase [glutamine-hydrolyzing] (527 aa).

Residues 19 to 212 (KIIVLDYGSQ…AFSICGAKGD (194 aa)) form the Glutamine amidotransferase type-1 domain. The active-site Nucleophile is Cys96. Residues His186 and Glu188 contribute to the active site. The GMPS ATP-PPase domain occupies 213–402 (WSMANFVDMQ…LGMPDEVVWR (190 aa)). 240 to 246 (SGGVDSS) serves as a coordination point for ATP.

In terms of assembly, homodimer.

The catalysed reaction is XMP + L-glutamine + ATP + H2O = GMP + L-glutamate + AMP + diphosphate + 2 H(+). The protein operates within purine metabolism; GMP biosynthesis; GMP from XMP (L-Gln route): step 1/1. In terms of biological role, catalyzes the synthesis of GMP from XMP. The chain is GMP synthase [glutamine-hydrolyzing] from Streptococcus thermophilus (strain ATCC BAA-250 / LMG 18311).